The chain runs to 89 residues: Small ribosomal subunit protein uS15c (89 aa).

The protein belongs to the universal ribosomal protein uS15 family. Part of the 30S ribosomal subunit.

It localises to the plastid. The protein resides in the chloroplast. The protein is Small ribosomal subunit protein uS15c (rps15) of Chloranthus spicatus (Chulantree).